A 152-amino-acid polypeptide reads, in one-letter code: Protein SprT-like (152 aa).

The SprT-like domain maps to 7–148 (QRLVEEVSLQ…GKCKGKLILI (142 aa)). Position 67 (His-67) interacts with Zn(2+). Glu-68 is a catalytic residue. A Zn(2+)-binding site is contributed by His-71.

This sequence belongs to the SprT family. Zn(2+) serves as cofactor.

It is found in the cytoplasm. The sequence is that of Protein SprT-like from Bacillus thuringiensis subsp. konkukian (strain 97-27).